Reading from the N-terminus, the 262-residue chain is Ribosomal RNA small subunit methyltransferase A (262 aa).

Positions 13, 15, 40, 61, 85, and 105 each coordinate S-adenosyl-L-methionine.

This sequence belongs to the class I-like SAM-binding methyltransferase superfamily. rRNA adenine N(6)-methyltransferase family. RsmA subfamily.

It is found in the cytoplasm. It catalyses the reaction adenosine(1518)/adenosine(1519) in 16S rRNA + 4 S-adenosyl-L-methionine = N(6)-dimethyladenosine(1518)/N(6)-dimethyladenosine(1519) in 16S rRNA + 4 S-adenosyl-L-homocysteine + 4 H(+). Specifically dimethylates two adjacent adenosines (A1518 and A1519) in the loop of a conserved hairpin near the 3'-end of 16S rRNA in the 30S particle. May play a critical role in biogenesis of 30S subunits. The sequence is that of Ribosomal RNA small subunit methyltransferase A from Laribacter hongkongensis (strain HLHK9).